A 471-amino-acid chain; its full sequence is Trigger factor (471 aa).

Residues 169-264 (GDVAVVDFKG…LKEIKEKELP (96 aa)) form the PPIase FKBP-type domain. Positions 443–471 (SLASQESEITAPETEAETIEVTAESTTGE) are disordered. Positions 448–471 (ESEITAPETEAETIEVTAESTTGE) are enriched in low complexity.

Belongs to the FKBP-type PPIase family. Tig subfamily.

The protein localises to the cytoplasm. The enzyme catalyses [protein]-peptidylproline (omega=180) = [protein]-peptidylproline (omega=0). Functionally, involved in protein export. Acts as a chaperone by maintaining the newly synthesized protein in an open conformation. Functions as a peptidyl-prolyl cis-trans isomerase. This Trichormus variabilis (strain ATCC 29413 / PCC 7937) (Anabaena variabilis) protein is Trigger factor.